Here is a 477-residue protein sequence, read N- to C-terminus: Glutamate--tRNA ligase 2 (477 aa).

A 'HIGH' region motif is present at residues 12 to 22; that stretch reads PSPTGRMHLGN. Zn(2+) is bound by residues cysteine 109, cysteine 111, cysteine 136, and histidine 138. Positions 253-257 match the 'KMSKS' region motif; it reads PLSKR. Position 256 (lysine 256) interacts with ATP.

It belongs to the class-I aminoacyl-tRNA synthetase family. Glutamate--tRNA ligase type 1 subfamily. Monomer. Zn(2+) serves as cofactor.

The protein localises to the cytoplasm. It catalyses the reaction tRNA(Glu) + L-glutamate + ATP = L-glutamyl-tRNA(Glu) + AMP + diphosphate. Catalyzes the attachment of glutamate to tRNA(Glu) in a two-step reaction: glutamate is first activated by ATP to form Glu-AMP and then transferred to the acceptor end of tRNA(Glu). This chain is Glutamate--tRNA ligase 2, found in Alkalilimnicola ehrlichii (strain ATCC BAA-1101 / DSM 17681 / MLHE-1).